The following is a 208-amino-acid chain: 3-isopropylmalate dehydratase small subunit (208 aa).

It belongs to the LeuD family. LeuD type 1 subfamily. In terms of assembly, heterodimer of LeuC and LeuD.

It catalyses the reaction (2R,3S)-3-isopropylmalate = (2S)-2-isopropylmalate. The protein operates within amino-acid biosynthesis; L-leucine biosynthesis; L-leucine from 3-methyl-2-oxobutanoate: step 2/4. Functionally, catalyzes the isomerization between 2-isopropylmalate and 3-isopropylmalate, via the formation of 2-isopropylmaleate. This Gluconobacter oxydans (strain 621H) (Gluconobacter suboxydans) protein is 3-isopropylmalate dehydratase small subunit.